The primary structure comprises 160 residues: Phosphopantetheine adenylyltransferase (160 aa).

Thr-9 contributes to the substrate binding site. ATP-binding positions include 9–10 and His-17; that span reads TF. The substrate site is built by Lys-41, Leu-73, and Arg-87. ATP is bound by residues 88–90, Glu-98, and 123–129; these read GLR and YMFISAS.

The protein belongs to the bacterial CoaD family. Homohexamer. It depends on Mg(2+) as a cofactor.

The protein localises to the cytoplasm. The enzyme catalyses (R)-4'-phosphopantetheine + ATP + H(+) = 3'-dephospho-CoA + diphosphate. It functions in the pathway cofactor biosynthesis; coenzyme A biosynthesis; CoA from (R)-pantothenate: step 4/5. In terms of biological role, reversibly transfers an adenylyl group from ATP to 4'-phosphopantetheine, yielding dephospho-CoA (dPCoA) and pyrophosphate. The chain is Phosphopantetheine adenylyltransferase from Thiobacillus denitrificans (strain ATCC 25259 / T1).